Here is a 901-residue protein sequence, read N- to C-terminus: Aconitate hydratase A (901 aa).

Residues Cys-443, Cys-509, and Cys-512 each contribute to the [4Fe-4S] cluster site.

The protein belongs to the aconitase/IPM isomerase family. Monomer. The cofactor is [4Fe-4S] cluster.

It catalyses the reaction citrate = D-threo-isocitrate. It carries out the reaction (2S,3R)-3-hydroxybutane-1,2,3-tricarboxylate = 2-methyl-cis-aconitate + H2O. The protein operates within carbohydrate metabolism; tricarboxylic acid cycle; isocitrate from oxaloacetate: step 2/2. It functions in the pathway organic acid metabolism; propanoate degradation. In terms of biological role, involved in the catabolism of short chain fatty acids (SCFA) via the tricarboxylic acid (TCA)(acetyl degradation route) and probably the 2-methylcitrate cycle I (propionate degradation route). Catalyzes the reversible isomerization of citrate to isocitrate via cis-aconitate. Could catalyze the hydration of 2-methyl-cis-aconitate to yield (2R,3S)-2-methylisocitrate. The apo form of AcnA functions as a RNA-binding regulatory protein. This chain is Aconitate hydratase A (acnA), found in Staphylococcus aureus (strain COL).